The sequence spans 359 residues: MRVLGIETSCDETAAAIVERDDMGEGRILSNLVLSQIAEHEPYGGVVPEIAARAHVEALDRLVDRALNDAGLKLYEVDAVAATAGPGLIGGLIVGLMTAKALAMAAQKPFYAVNHLEGHALTARLTDGLPFPYLLLLVSGGHTQMVLVRGIGDYERLGTTIDDALGEAFDKTAKLLGLPYPGGPAVERMALQGDQKRFALPRPLKGEARLNFSFSGLKTAVRQTATELVPLTDQDVTDICASFQAAVADTLSDRVGRSLERFKTEFPDCATPSLVVAGGVAANKTLRAALENLCTRHGFAFIAPPLNLCTDNAAMIAWAGAERAATQAPDSLDIAPRSRWPLDEKSAPVFGTGRRGAKA.

His-115 and His-119 together coordinate Fe cation. Residues 137–141 (LVSGG), Asp-170, Gly-183, and Asn-283 each bind substrate. Residue Asp-311 participates in Fe cation binding. A disordered region spans residues 328–359 (APDSLDIAPRSRWPLDEKSAPVFGTGRRGAKA).

It belongs to the KAE1 / TsaD family. The cofactor is Fe(2+).

The protein resides in the cytoplasm. It catalyses the reaction L-threonylcarbamoyladenylate + adenosine(37) in tRNA = N(6)-L-threonylcarbamoyladenosine(37) in tRNA + AMP + H(+). Functionally, required for the formation of a threonylcarbamoyl group on adenosine at position 37 (t(6)A37) in tRNAs that read codons beginning with adenine. Is involved in the transfer of the threonylcarbamoyl moiety of threonylcarbamoyl-AMP (TC-AMP) to the N6 group of A37, together with TsaE and TsaB. TsaD likely plays a direct catalytic role in this reaction. In Brucella suis (strain ATCC 23445 / NCTC 10510), this protein is tRNA N6-adenosine threonylcarbamoyltransferase.